Reading from the N-terminus, the 145-residue chain is Antiholin-like protein LrgA (145 aa).

Transmembrane regions (helical) follow at residues 13 to 30 (FFHQ…SKII), 40 to 62 (GSVI…LGEV), 69 to 91 (LTNN…LGVI), and 95 to 117 (PFLI…GYVT).

Belongs to the CidA/LrgA family. LrgA subfamily.

Its subcellular location is the cell membrane. Inhibits the expression or activity of extracellular murein hydrolases by interacting, possibly with LrgB, with the holin-like proteins CidA and/or CidB. The LrgAB and CidAB proteins may affect the proton motive force of the membrane. May be involved in programmed cell death (PCD), possibly triggering PCD in response to antibiotics and environmental stresses. The protein is Antiholin-like protein LrgA of Staphylococcus aureus (strain MW2).